A 90-amino-acid polypeptide reads, in one-letter code: Putative septation protein SpoVG (90 aa).

The protein belongs to the SpoVG family.

Functionally, could be involved in septation. This Clostridium perfringens (strain ATCC 13124 / DSM 756 / JCM 1290 / NCIMB 6125 / NCTC 8237 / Type A) protein is Putative septation protein SpoVG.